Here is a 591-residue protein sequence, read N- to C-terminus: MSLLTNYEGLRHQIERLVRENEELKKLVRLIRENHELKSAIKTQAGGLGISGFTSGLGEATAGLSSRQNNGVFLPPSPAVANERVLEEVGIMALAPLAEMLTSLQPSATPGSLMSPLTGTLSTLLSGPAPTSQSSPLTSFLTSPIAGPLTGTLASSLGLPSTGTLTPSSLVAGPVAMSQSSPLIAPVMGTVAVSLSSPLLSSTATPPGVSQNLLANPMSNLVLPEAPRLRLAEPLRGGPTGPQSPACVVPTATTKVPLSTEPPQSTQDPEPLSMAFAGAPLQTSTPIGAMGTPAPKTAFSFNTSDTQAQPSAAQEQVVPASVPTSPTTSPTVTVLASAPALAPQVATSYTPSSTTHIAQGAPHPPSRMHNSPTQNLPVPHCPPHNAHSPPRTSSSPASVNDSRGPRTTEPSTKSMMEVERKLAHRKTSKFPENPRESKQLAWERLVGEIAFQLDRRILSSIFPERVRLYGFTVSNIPEKIIQASLNPSDHKLDEKLCQRLTQRYVSVMNRLQSLGYNGRVHPALTEQLVNAYGILRERPELAASEGGPYTVDFLQRVVVETVHPGMLADALLLLSCLSQLAHDDGKPMFIW.

Residues 1-42 are a coiled coil; sequence MSLLTNYEGLRHQIERLVRENEELKKLVRLIRENHELKSAIK. The tract at residues 1 to 78 is necessary for targeting centrosomes; the sequence is MSLLTNYEGL…NNGVFLPPSP (78 aa). Residues 302–314 are compositionally biased toward polar residues; sequence NTSDTQAQPSAAQ. 2 disordered regions span residues 302-331 and 346-435; these read NTSD…TSPT and ATSY…ENPR. Residues 317-331 are compositionally biased toward low complexity; the sequence is VVPASVPTSPTTSPT. Composition is skewed to polar residues over residues 346 to 357 and 390 to 401; these read ATSYTPSSTTHI and PRTSSSPASVND.

Belongs to the speriolin family. Found in a complex with CDC20, CDC27 and TUBG1. Interacts with CDC20. Detected only in testis.

Its subcellular location is the cytoplasm. It is found in the cytoskeleton. The protein resides in the microtubule organizing center. It localises to the centrosome. In Homo sapiens (Human), this protein is Speriolin (SPATC1).